Here is a 482-residue protein sequence, read N- to C-terminus: Methylenetetrahydrofolate--tRNA-(uracil-5-)-methyltransferase TrmFO (482 aa).

Residue 11–16 (GGGLAG) coordinates FAD. Positions 450 to 482 (LRQPSPWSAEDSPRAALPIPEPTPLGPASGSSE) are disordered.

Belongs to the MnmG family. TrmFO subfamily. It depends on FAD as a cofactor.

Its subcellular location is the cytoplasm. The catalysed reaction is uridine(54) in tRNA + (6R)-5,10-methylene-5,6,7,8-tetrahydrofolate + NADH + H(+) = 5-methyluridine(54) in tRNA + (6S)-5,6,7,8-tetrahydrofolate + NAD(+). It catalyses the reaction uridine(54) in tRNA + (6R)-5,10-methylene-5,6,7,8-tetrahydrofolate + NADPH + H(+) = 5-methyluridine(54) in tRNA + (6S)-5,6,7,8-tetrahydrofolate + NADP(+). Catalyzes the folate-dependent formation of 5-methyl-uridine at position 54 (M-5-U54) in all tRNAs. The protein is Methylenetetrahydrofolate--tRNA-(uracil-5-)-methyltransferase TrmFO of Rhodospirillum rubrum (strain ATCC 11170 / ATH 1.1.1 / DSM 467 / LMG 4362 / NCIMB 8255 / S1).